Reading from the N-terminus, the 79-residue chain is Small ribosomal subunit protein bS18 (79 aa).

It belongs to the bacterial ribosomal protein bS18 family. As to quaternary structure, part of the 30S ribosomal subunit. Forms a tight heterodimer with protein bS6.

Binds as a heterodimer with protein bS6 to the central domain of the 16S rRNA, where it helps stabilize the platform of the 30S subunit. In Aster yellows witches'-broom phytoplasma (strain AYWB), this protein is Small ribosomal subunit protein bS18.